The sequence spans 505 residues: Putative thymidine phosphorylase (505 aa).

Belongs to the thymidine/pyrimidine-nucleoside phosphorylase family. Type 2 subfamily.

The catalysed reaction is thymidine + phosphate = 2-deoxy-alpha-D-ribose 1-phosphate + thymine. This chain is Putative thymidine phosphorylase, found in Parvibaculum lavamentivorans (strain DS-1 / DSM 13023 / NCIMB 13966).